The chain runs to 753 residues: Oligopeptide transporter 5 (753 aa).

A run of 15 helical transmembrane segments spans residues 56–76, 80–100, 132–152, 163–183, 224–244, 296–316, 368–388, 432–452, 461–481, 506–528, 544–564, 583–603, 615–635, 662–682, and 695–715; these read TWFL…FFGY, PLTV…KLMA, ITIF…LTIV, AAAM…AGMF, FFLI…YLFP, FFAI…ILPI, YLSI…TATI, WWFV…CEGF, WGLL…GVIL, PLAN…YFVG, FIVQ…TTWW, PWTC…GIIG, PGMN…WFFA, AKAV…YYIF, and ILSA…YFAL.

Belongs to the oligopeptide OPT transporter (TC 2.A.67.1) family. In terms of tissue distribution, expressed predominantly in flowers, and at a very low level in leaves and roots.

It is found in the membrane. In terms of biological role, involved in the translocation of tetra- and pentapeptides across the cellular membrane in an energy-dependent manner. This chain is Oligopeptide transporter 5 (OPT5), found in Arabidopsis thaliana (Mouse-ear cress).